Here is a 188-residue protein sequence, read N- to C-terminus: RWD domain-containing protein 4 (188 aa).

The 103-residue stretch at 9–111 folds into the RWD domain; it reads MELEALRSIY…EYAKDHKEQF (103 aa). The disordered stretch occupies residues 132–167; sequence TPTTAPSSKKKEKKEQLSKAQKRKLADKTDHKGELP. Positions 155–166 are enriched in basic and acidic residues; it reads KLADKTDHKGEL.

This Mus musculus (Mouse) protein is RWD domain-containing protein 4 (Rwdd4).